A 137-amino-acid polypeptide reads, in one-letter code: Large ribosomal subunit protein uL16 (137 aa).

It belongs to the universal ribosomal protein uL16 family. In terms of assembly, part of the 50S ribosomal subunit.

In terms of biological role, binds 23S rRNA and is also seen to make contacts with the A and possibly P site tRNAs. This is Large ribosomal subunit protein uL16 from Stutzerimonas stutzeri (strain A1501) (Pseudomonas stutzeri).